Reading from the N-terminus, the 271-residue chain is Ribosomal RNA small subunit methyltransferase A (271 aa).

Positions 11, 13, 38, 58, 86, and 101 each coordinate S-adenosyl-L-methionine.

The protein belongs to the class I-like SAM-binding methyltransferase superfamily. rRNA adenine N(6)-methyltransferase family. RsmA subfamily.

Its subcellular location is the cytoplasm. It catalyses the reaction adenosine(1518)/adenosine(1519) in 16S rRNA + 4 S-adenosyl-L-methionine = N(6)-dimethyladenosine(1518)/N(6)-dimethyladenosine(1519) in 16S rRNA + 4 S-adenosyl-L-homocysteine + 4 H(+). Specifically dimethylates two adjacent adenosines (A1518 and A1519) in the loop of a conserved hairpin near the 3'-end of 16S rRNA in the 30S particle. May play a critical role in biogenesis of 30S subunits. This chain is Ribosomal RNA small subunit methyltransferase A, found in Helicobacter acinonychis (strain Sheeba).